The following is a 239-amino-acid chain: Putative transcriptional regulator of 2-aminoethylphosphonate degradation operons (239 aa).

The HTH gntR-type domain occupies 8–76 (IPQYLLIKAQ…DRRGWFVTPE (69 aa)). The segment at residues 36 to 55 (ERELCAIFNTTRITIRESLA) is a DNA-binding region (H-T-H motif).

The polypeptide is Putative transcriptional regulator of 2-aminoethylphosphonate degradation operons (phnR) (Salmonella paratyphi A (strain ATCC 9150 / SARB42)).